Reading from the N-terminus, the 401-residue chain is L-threonine ammonia-lyase (401 aa).

An N6-(pyridoxal phosphate)lysine modification is found at Lys51. Residues Asn78, 178 to 181 (GGGL), and Ser301 contribute to the pyridoxal 5'-phosphate site. The ACT domain occupies 326 to 401 (FIETFVMDRP…AKGYEVRIVG (76 aa)).

This sequence belongs to the serine/threonine dehydratase family. In terms of assembly, homotetramer. The cofactor is pyridoxal 5'-phosphate.

The enzyme catalyses L-threonine = 2-oxobutanoate + NH4(+). It carries out the reaction L-serine = pyruvate + NH4(+). The protein operates within amino-acid biosynthesis; L-isoleucine biosynthesis; 2-oxobutanoate from L-threonine: step 1/1. Activity is insensitive to allosteric regulators L-valine and L-isoleucine at low concentrations, while these L-amino acids are inhibitors at high concentrations. Is insensitive to ammonium chloride and AMP. Inhibited in the presence of aminoxyacetic acid (AOAA), an inhibitor of pyridoxal phosphate-dependent enzymes. Its function is as follows. Catalyzes the conversion of L-threonine to 2-oxobutanoate and ammonia. Can also use L-serine, but the catalytic efficiency toward L-threonine is about sixfold higher than that toward L-serine. Also shows weak activity toward L-allo-threonine, but cannot use the corresponding D-amino acids. Does not exhibit racemase activity toward various amino acids, including serine. Physiologically, is likely involved in the threonine-dependent pathway of isoleucine biosynthesis. This is L-threonine ammonia-lyase from Thermotoga maritima (strain ATCC 43589 / DSM 3109 / JCM 10099 / NBRC 100826 / MSB8).